The sequence spans 85 residues: Hepcidin (85 aa).

Positions 1 to 22 (MALSTRIQAACLLLLLLASVAS) are cleaved as a signal peptide. Positions 23-54 (VSVLPHQTGQLTDLRAQDTAGAEAGLQPTLQL) are excised as a propeptide. 4 disulfide bridges follow: Cys-67–Cys-83, Cys-70–Cys-73, Cys-71–Cys-79, and Cys-74–Cys-82.

This sequence belongs to the hepcidin family. As to quaternary structure, interacts with SLC40A1; this interaction promotes SLC40A1 rapid ubiquitination.

Its subcellular location is the secreted. Its function is as follows. Liver-produced hormone that constitutes the main circulating regulator of iron absorption and distribution across tissues. Acts by promoting endocytosis and degradation of ferroportin/SLC40A1, leading to the retention of iron in iron-exporting cells and decreased flow of iron into plasma. Controls the major flows of iron into plasma: absorption of dietary iron in the intestine, recycling of iron by macrophages, which phagocytose old erythrocytes and other cells, and mobilization of stored iron from hepatocytes. Has strong antimicrobial activity against E.coli ML35P N.cinerea and weaker against S.epidermidis, S.aureus and group b streptococcus bacteria. Active against the fungus C.albicans. No activity against P.aeruginosa. The chain is Hepcidin (HAMP) from Canis lupus familiaris (Dog).